The following is a 124-amino-acid chain: Large ribosomal subunit protein bL12 (124 aa).

It belongs to the bacterial ribosomal protein bL12 family. In terms of assembly, homodimer. Part of the ribosomal stalk of the 50S ribosomal subunit. Forms a multimeric L10(L12)X complex, where L10 forms an elongated spine to which 2 to 4 L12 dimers bind in a sequential fashion. Binds GTP-bound translation factors.

Functionally, forms part of the ribosomal stalk which helps the ribosome interact with GTP-bound translation factors. Is thus essential for accurate translation. The chain is Large ribosomal subunit protein bL12 from Allorhizobium ampelinum (strain ATCC BAA-846 / DSM 112012 / S4) (Agrobacterium vitis (strain S4)).